A 388-amino-acid polypeptide reads, in one-letter code: Arrestin-C (388 aa).

Belongs to the arrestin family. Homodimer; disulfide-linked in response to retinal illumination. Interacts with CXCR4; the interaction is dependent on the C-terminal phosphorylation of CXCR4 and modulates the calcium ion mobilization activity of CXCR4. Interacts with GPR84. In terms of tissue distribution, inner and outer segments, and the inner plexiform regions of the retina.

Its subcellular location is the photoreceptor inner segment. It localises to the cell projection. The protein resides in the cilium. It is found in the photoreceptor outer segment. Its function is as follows. May play a role in an as yet undefined retina-specific signal transduction. Could bind to photoactivated-phosphorylated red/green opsins. This chain is Arrestin-C (ARR3), found in Homo sapiens (Human).